A 272-amino-acid chain; its full sequence is NAD kinase (272 aa).

Catalysis depends on Asp-50, which acts as the Proton acceptor. NAD(+) is bound by residues 50-51, 126-127, Arg-152, Asp-154, 165-170, and Ala-189; these read DG, NE, and TAYNKS.

Belongs to the NAD kinase family. It depends on a divalent metal cation as a cofactor.

It is found in the cytoplasm. It catalyses the reaction NAD(+) + ATP = ADP + NADP(+) + H(+). Involved in the regulation of the intracellular balance of NAD and NADP, and is a key enzyme in the biosynthesis of NADP. Catalyzes specifically the phosphorylation on 2'-hydroxyl of the adenosine moiety of NAD to yield NADP. The protein is NAD kinase of Streptococcus pneumoniae (strain Hungary19A-6).